Here is a 272-residue protein sequence, read N- to C-terminus: Dermonecrotic toxin LvSicTox-alphaIC1bii (272 aa).

His-5 is an active-site residue. Mg(2+)-binding residues include Glu-25 and Asp-27. His-41 acts as the Nucleophile in catalysis. 2 cysteine pairs are disulfide-bonded: Cys-45–Cys-51 and Cys-47–Cys-189. Asp-84 provides a ligand contact to Mg(2+).

The protein belongs to the arthropod phospholipase D family. Class II subfamily. Mg(2+) is required as a cofactor. As to expression, expressed by the venom gland.

The protein resides in the secreted. It catalyses the reaction an N-(acyl)-sphingosylphosphocholine = an N-(acyl)-sphingosyl-1,3-cyclic phosphate + choline. The enzyme catalyses an N-(acyl)-sphingosylphosphoethanolamine = an N-(acyl)-sphingosyl-1,3-cyclic phosphate + ethanolamine. The catalysed reaction is a 1-acyl-sn-glycero-3-phosphocholine = a 1-acyl-sn-glycero-2,3-cyclic phosphate + choline. It carries out the reaction a 1-acyl-sn-glycero-3-phosphoethanolamine = a 1-acyl-sn-glycero-2,3-cyclic phosphate + ethanolamine. Its function is as follows. Dermonecrotic toxins cleave the phosphodiester linkage between the phosphate and headgroup of certain phospholipids (sphingolipid and lysolipid substrates), forming an alcohol (often choline) and a cyclic phosphate. This toxin acts on sphingomyelin (SM). It may also act on ceramide phosphoethanolamine (CPE), lysophosphatidylcholine (LPC) and lysophosphatidylethanolamine (LPE), but not on lysophosphatidylserine (LPS), and lysophosphatidylglycerol (LPG). It acts by transphosphatidylation, releasing exclusively cyclic phosphate products as second products. Induces dermonecrosis, hemolysis, increased vascular permeability, edema, inflammatory response, and platelet aggregation. In Loxosceles variegata (Recluse spider), this protein is Dermonecrotic toxin LvSicTox-alphaIC1bii.